A 157-amino-acid polypeptide reads, in one-letter code: Beta-defensin 125 (157 aa).

The first 20 residues, 1 to 20, serve as a signal peptide directing secretion; sequence MNLLMLTFIICGLLTQVTKG. Disulfide bonds link Cys-27-Cys-55, Cys-35-Cys-49, and Cys-39-Cys-56. The disordered stretch occupies residues 109–157; the sequence is GETITPETNTPETTMPPSETTSSKTTMPPSETATSETMPPPSQTALTHN. Positions 110–140 are enriched in low complexity; sequence ETITPETNTPETTMPPSETTSSKTTMPPSET. Polar residues predominate over residues 141 to 157; that stretch reads ATSETMPPPSQTALTHN.

The protein belongs to the beta-defensin family.

Its subcellular location is the secreted. In terms of biological role, has antibacterial activity. The chain is Beta-defensin 125 (DEFB125) from Pongo pygmaeus (Bornean orangutan).